The chain runs to 1009 residues: Protein translocase subunit SecA (1009 aa).

ATP is bound by residues glutamine 86, 104–108 (GEGKT), and aspartate 497. 2 disordered regions span residues 869-894 (AVPQPAGASGPALQPVPAATAPGQQP) and 949-1009 (ERRP…RNAG). Low complexity-rich tracts occupy residues 883–894 (PVPAATAPGQQP) and 953–973 (SGAAARGPSPASASRQRAGAG). Zn(2+) contacts are provided by cysteine 990, cysteine 992, cysteine 1001, and histidine 1002.

It belongs to the SecA family. Monomer and homodimer. Part of the essential Sec protein translocation apparatus which comprises SecA, SecYEG and auxiliary proteins SecDF. Other proteins may also be involved. It depends on Zn(2+) as a cofactor.

It is found in the cell membrane. The protein localises to the cytoplasm. It carries out the reaction ATP + H2O + cellular proteinSide 1 = ADP + phosphate + cellular proteinSide 2.. Its function is as follows. Part of the Sec protein translocase complex. Interacts with the SecYEG preprotein conducting channel. Has a central role in coupling the hydrolysis of ATP to the transfer of proteins into and across the cell membrane, serving as an ATP-driven molecular motor driving the stepwise translocation of polypeptide chains across the membrane. The sequence is that of Protein translocase subunit SecA from Acidothermus cellulolyticus (strain ATCC 43068 / DSM 8971 / 11B).